The sequence spans 379 residues: L-lactate dehydrogenase (379 aa).

Residues 1–379 (MIISSSTDYR…ITSELLVREP (379 aa)) form the FMN hydroxy acid dehydrogenase domain. Y24 contacts substrate. Residues S106 and Q127 each contribute to the FMN site. Y129 lines the substrate pocket. Residue T155 coordinates FMN. R164 contributes to the substrate binding site. Residue K251 participates in FMN binding. The active-site Proton acceptor is H275. Position 278 (R278) interacts with substrate. 306–330 (DSGIRSGLDVVRMIALGADAAMLGR) contributes to the FMN binding site.

Belongs to the FMN-dependent alpha-hydroxy acid dehydrogenase family. The cofactor is FMN.

It is found in the cell membrane. The catalysed reaction is (S)-lactate + A = pyruvate + AH2. Functionally, catalyzes the conversion of L-lactate to pyruvate. Is coupled to the respiratory chain. This is L-lactate dehydrogenase from Alcaligenes faecalis.